We begin with the raw amino-acid sequence, 169 residues long: 2-C-methyl-D-erythritol 2,4-cyclodiphosphate synthase (169 aa).

2 residues coordinate a divalent metal cation: Asp13 and His15. Residues 13–15 (DVH) and 39–40 (HS) contribute to the 4-CDP-2-C-methyl-D-erythritol 2-phosphate site. His47 is an a divalent metal cation binding site. 4-CDP-2-C-methyl-D-erythritol 2-phosphate-binding positions include 61–63 (DIG), 66–70 (FPDTD), Phe144, and Arg147.

The protein belongs to the IspF family. Homotrimer. A divalent metal cation serves as cofactor.

The enzyme catalyses 4-CDP-2-C-methyl-D-erythritol 2-phosphate = 2-C-methyl-D-erythritol 2,4-cyclic diphosphate + CMP. It functions in the pathway isoprenoid biosynthesis; isopentenyl diphosphate biosynthesis via DXP pathway; isopentenyl diphosphate from 1-deoxy-D-xylulose 5-phosphate: step 4/6. Functionally, involved in the biosynthesis of isopentenyl diphosphate (IPP) and dimethylallyl diphosphate (DMAPP), two major building blocks of isoprenoid compounds. Catalyzes the conversion of 4-diphosphocytidyl-2-C-methyl-D-erythritol 2-phosphate (CDP-ME2P) to 2-C-methyl-D-erythritol 2,4-cyclodiphosphate (ME-CPP) with a corresponding release of cytidine 5-monophosphate (CMP). The polypeptide is 2-C-methyl-D-erythritol 2,4-cyclodiphosphate synthase (Cupriavidus pinatubonensis (strain JMP 134 / LMG 1197) (Cupriavidus necator (strain JMP 134))).